A 617-amino-acid polypeptide reads, in one-letter code: DNA mismatch repair protein MutL (617 aa).

This sequence belongs to the DNA mismatch repair MutL/HexB family.

Functionally, this protein is involved in the repair of mismatches in DNA. It is required for dam-dependent methyl-directed DNA mismatch repair. May act as a 'molecular matchmaker', a protein that promotes the formation of a stable complex between two or more DNA-binding proteins in an ATP-dependent manner without itself being part of a final effector complex. The chain is DNA mismatch repair protein MutL from Christiangramia forsetii (strain DSM 17595 / CGMCC 1.15422 / KT0803) (Gramella forsetii).